Here is a 274-residue protein sequence, read N- to C-terminus: Large ribosomal subunit protein uL2cz/uL2cy (274 aa).

Disordered regions lie at residues 1–22 (MAIH…DSQV) and 225–252 (PVDH…GYPA).

It belongs to the universal ribosomal protein uL2 family. In terms of assembly, part of the 50S ribosomal subunit.

It is found in the plastid. The protein localises to the chloroplast. The polypeptide is Large ribosomal subunit protein uL2cz/uL2cy (rpl2-A) (Barbarea verna (Land cress)).